We begin with the raw amino-acid sequence, 717 residues long: CRISPR-associated protein Cas8b (717 aa).

Disordered stretches follow at residues 263 to 283 (IGVF…DQSW) and 698 to 717 (HEKE…STTN). A compositionally biased stretch (acidic residues) spans 701 to 717 (EDEDDQDTEEPAESTTN).

It is found in the cytoplasm. CRISPR (clustered regularly interspaced short palindromic repeat) is an adaptive immune system that provides protection against mobile genetic elements (viruses, transposable elements and conjugative plasmids). CRISPR clusters contain sequences complementary to antecedent mobile elements and target invading nucleic acids. CRISPR clusters are transcribed and processed into CRISPR RNA (crRNA). Plasmid targeted by CRISPR locus P1 transform wild-type cells very poorly. This subunit might be involved in stabilizing crRNA. The sequence is that of CRISPR-associated protein Cas8b from Haloferax volcanii (strain ATCC 29605 / DSM 3757 / JCM 8879 / NBRC 14742 / NCIMB 2012 / VKM B-1768 / DS2) (Halobacterium volcanii).